Consider the following 309-residue polypeptide: Heme A synthase (309 aa).

At M1–K6 the chain is on the cytoplasmic side. A helical transmembrane segment spans residues I7–T27. At K28 to R62 the chain is on the extracellular side. C35 and C42 are joined by a disulfide. E58 is an active-site residue. H61 serves as a coordination point for heme o. The helical transmembrane segment at G63–L83 threads the bilayer. At R84–E88 the chain is on the cytoplasmic side. A helical membrane pass occupies residues V89 to A109. Topologically, residues A110–H123 are extracellular. H123 provides a ligand contact to heme o. A helical membrane pass occupies residues F124–I144. Over D145–H159 the chain is Cytoplasmic. Residues R160–V180 traverse the membrane as a helical segment. The Extracellular portion of the chain corresponds to R181 to W211. C189 and C195 are oxidised to a cystine. Residues V212 to I232 traverse the membrane as a helical segment. H216 is a heme b binding site. At R233 to S247 the chain is on the cytoplasmic side. A helical transmembrane segment spans residues W248–T268. Residues S269 to N271 lie on the Extracellular side of the membrane. Residues L272–F292 traverse the membrane as a helical segment. Residue H278 participates in heme b binding. Over M293–S309 the chain is Cytoplasmic.

Belongs to the COX15/CtaA family. Type 1 subfamily. In terms of assembly, interacts with CtaB. It depends on heme b as a cofactor.

The protein localises to the cell membrane. It carries out the reaction Fe(II)-heme o + 2 A + H2O = Fe(II)-heme a + 2 AH2. It participates in porphyrin-containing compound metabolism; heme A biosynthesis; heme A from heme O: step 1/1. Catalyzes the conversion of heme O to heme A by two successive hydroxylations of the methyl group at C8. The first hydroxylation forms heme I, the second hydroxylation results in an unstable dihydroxymethyl group, which spontaneously dehydrates, resulting in the formyl group of heme A. The chain is Heme A synthase from Oceanobacillus iheyensis (strain DSM 14371 / CIP 107618 / JCM 11309 / KCTC 3954 / HTE831).